Consider the following 143-residue polypeptide: Nucleoside diphosphate kinase (143 aa).

ATP-binding residues include Lys-11, Phe-59, Arg-87, Thr-93, Arg-104, and Asn-114. Catalysis depends on His-117, which acts as the Pros-phosphohistidine intermediate.

Belongs to the NDK family. As to quaternary structure, homotetramer. The cofactor is Mg(2+).

Its subcellular location is the cytoplasm. The enzyme catalyses a 2'-deoxyribonucleoside 5'-diphosphate + ATP = a 2'-deoxyribonucleoside 5'-triphosphate + ADP. It catalyses the reaction a ribonucleoside 5'-diphosphate + ATP = a ribonucleoside 5'-triphosphate + ADP. Major role in the synthesis of nucleoside triphosphates other than ATP. The ATP gamma phosphate is transferred to the NDP beta phosphate via a ping-pong mechanism, using a phosphorylated active-site intermediate. This chain is Nucleoside diphosphate kinase, found in Shigella boydii serotype 4 (strain Sb227).